Here is a 971-residue protein sequence, read N- to C-terminus: Lon protease homolog, mitochondrial (971 aa).

Residues Met1–Tyr55 constitute a mitochondrion transit peptide. One can recognise a Lon N-terminal domain in the interval Val89–Lys359. Residues Thr190–Lys255 are disordered. Positions Leu214–Ala224 are enriched in pro residues. Gly512–Thr519 contacts ATP. Residues Ala718–Ser749 form a disordered region. Positions Thr733 to Ser749 are enriched in polar residues. One can recognise a Lon proteolytic domain in the interval Val784–Gln971. Catalysis depends on residues Ser878 and Lys921.

This sequence belongs to the peptidase S16 family. Homohexamer or homoheptamer. Organized in a ring with a central cavity.

It is found in the mitochondrion matrix. The enzyme catalyses Hydrolysis of proteins in presence of ATP.. In terms of biological role, ATP-dependent serine protease that mediates the selective degradation of misfolded, unassembled or oxidatively damaged polypeptides as well as certain short-lived regulatory proteins in the mitochondrial matrix. May also have a chaperone function in the assembly of inner membrane protein complexes. Participates in the regulation of mitochondrial gene expression and in the maintenance of the integrity of the mitochondrial genome. Binds to mitochondrial DNA in a site-specific manner. Involved in the degradation of transcription factor atfs-1 in the mitochondrion. In Caenorhabditis elegans, this protein is Lon protease homolog, mitochondrial.